Consider the following 359-residue polypeptide: Alanine racemase (359 aa).

Lys-34 serves as the catalytic Proton acceptor; specific for D-alanine. Lys-34 bears the N6-(pyridoxal phosphate)lysine mark. Arg-129 provides a ligand contact to substrate. Tyr-254 (proton acceptor; specific for L-alanine) is an active-site residue. Residue Met-302 coordinates substrate.

The protein belongs to the alanine racemase family. It depends on pyridoxal 5'-phosphate as a cofactor.

The catalysed reaction is L-alanine = D-alanine. It functions in the pathway amino-acid biosynthesis; D-alanine biosynthesis; D-alanine from L-alanine: step 1/1. In terms of biological role, catalyzes the interconversion of L-alanine and D-alanine. May also act on other amino acids. The polypeptide is Alanine racemase (alr) (Yersinia pestis).